A 250-amino-acid polypeptide reads, in one-letter code: Pyrroloquinoline-quinone synthase (250 aa).

The protein belongs to the PqqC family.

It carries out the reaction 6-(2-amino-2-carboxyethyl)-7,8-dioxo-1,2,3,4,7,8-hexahydroquinoline-2,4-dicarboxylate + 3 O2 = pyrroloquinoline quinone + 2 H2O2 + 2 H2O + H(+). It functions in the pathway cofactor biosynthesis; pyrroloquinoline quinone biosynthesis. Functionally, ring cyclization and eight-electron oxidation of 3a-(2-amino-2-carboxyethyl)-4,5-dioxo-4,5,6,7,8,9-hexahydroquinoline-7,9-dicarboxylic-acid to PQQ. This is Pyrroloquinoline-quinone synthase from Xanthomonas euvesicatoria pv. vesicatoria (strain 85-10) (Xanthomonas campestris pv. vesicatoria).